The sequence spans 281 residues: Survival motor neuron protein 1 (281 aa).

Disordered stretches follow at residues 1 to 20 (MANG…SDDS) and 42 to 77 (ALKG…NAAP). The residue at position 14 (Thr14) is a Phosphothreonine. 2 positions are modified to phosphoserine: Ser17 and Ser20. The span at 59–73 (KKRKNNKKNKSRKRC) shows a compositional bias: basic residues. Residues 80–140 (EWQVGDSCYA…LTEPPDMDED (61 aa)) form the Tudor domain. Residues 145 to 159 (ANVKETESSTEESDR) show a composition bias toward basic and acidic residues. The interval 145-242 (ANVKETESST…PMSPDFGEDD (98 aa)) is disordered. Pro residues-rich tracts occupy residues 179-197 (MGPP…PPPP) and 212-235 (PSFP…PPMS). Positions 225 to 252 (PPMIPPPPPMSPDFGEDDEALGSMLISW) are P2 (binding site for SNRPB). The interval 264–279 (GLRQGRKEAAASKKSH) is required for interaction with SYNCRIP.

The protein belongs to the SMN family. As to quaternary structure, homodimer. Component of an import snRNP complex composed of kpnb1, rnut1, smn1 and znf259. Part of the core SMN complex that contains smn1, gemin2/sip1, ddx20/gemin3, gemin4, gemin5, gemin6, gemin7, gemin8 and strap/unrip. Interacts with ddx20, fbl, nola1, rnut1, syncrip and with several spliceosomal snRNP core Sm proteins, including snrpb, snrpd1, snrpd2, snrpd3, snrpe and ilf3. Interacts with elavl4.

It localises to the nucleus. The protein resides in the gem. Its subcellular location is the cajal body. The protein localises to the cytoplasm. It is found in the cytoplasmic granule. It localises to the perikaryon. The protein resides in the cell projection. Its subcellular location is the neuron projection. The protein localises to the myofibril. It is found in the sarcomere. It localises to the z line. The SMN complex plays an essential role in spliceosomal snRNP assembly in the cytoplasm and is required for pre-mRNA splicing in the nucleus. It may also play a role in the metabolism of snoRNPs. Required in motor neurons and proprioceptive neurons to ensure correct U12 intron splicing and proper levels of tmem41b mRNA. Required for the maturation of motor neuron axonal branches and dendrites. The protein is Survival motor neuron protein 1 (smn1) of Danio rerio (Zebrafish).